A 520-amino-acid polypeptide reads, in one-letter code: RNA-binding protein MEX3A (520 aa).

The tract at residues G49 to S111 is disordered. Positions E60–A69 are enriched in gly residues. Pro residues predominate over residues P73–A91. KH domains are found at residues T132–I193 and Q223–I284. Position 338 is a phosphoserine (S338). Positions S412 to R461 are disordered. S462 is modified (phosphoserine). Residues C469–H509 form an RING-type zinc finger.

Phosphorylated. As to expression, highest levels found in fetal brain and testis. Detected also in thymus, salivary gland and uterus.

Its subcellular location is the cytoplasm. The protein localises to the nucleus. It is found in the P-body. Functionally, RNA binding protein, may be involved in post-transcriptional regulatory mechanisms. This chain is RNA-binding protein MEX3A (MEX3A), found in Homo sapiens (Human).